Consider the following 97-residue polypeptide: uncharacterized protein (97 aa).

Belongs to the mycobacterial PE family.

Its function is as follows. Part of the ESX-1 / type VII specialized secretion system (T7SS), which exports several proteins including EsxA and EsxB. Plays a role in DNA conjugation, in at least a donor strain. This is an uncharacterized protein from Mycolicibacterium smegmatis (strain ATCC 700084 / mc(2)155) (Mycobacterium smegmatis).